A 960-amino-acid chain; its full sequence is Semaphorin-6C (960 aa).

The first 23 residues, methionine 1–threonine 23, serve as a signal peptide directing secretion. At alanine 24–proline 635 the chain is on the extracellular side. Residues proline 29 to leucine 515 form the Sema domain. N-linked (GlcNAc...) asparagine glycosylation is present at asparagine 69. Cystine bridges form between cysteine 110-cysteine 120, cysteine 138-cysteine 147, cysteine 261-cysteine 372, and cysteine 286-cysteine 331. Residue asparagine 285 is glycosylated (N-linked (GlcNAc...) asparagine). A glycan (N-linked (GlcNAc...) asparagine) is linked at asparagine 436. 4 cysteine pairs are disulfide-bonded: cysteine 478/cysteine 509, cysteine 518/cysteine 536, cysteine 524/cysteine 569, and cysteine 528/cysteine 544. The tract at residues valine 555–serine 624 is disordered. Residues leucine 636 to valine 656 traverse the membrane as a helical segment. At serine 657–phenylalanine 960 the chain is on the cytoplasmic side. Disordered regions lie at residues leucine 685–glutamate 725, alanine 745–glutamate 792, and histidine 806–phenylalanine 960. The segment covering arginine 899 to serine 909 has biased composition (low complexity). The segment covering proline 922 to valine 935 has biased composition (basic and acidic residues). Over residues serine 940–alanine 952 the composition is skewed to pro residues.

It belongs to the semaphorin family. Expressed in many regions of the developing nervous system, probably in neurons and their precursors, but also in nonneural tissue such as immature muscle and dermis. In adult, strong expression in the skeletal muscle and moderate expression in the brain, where cerebellum shows the highest expression. Also expressed in almost all areas of the CNS.

It is found in the cell membrane. Shows growth cone collapsing activity on dorsal root ganglion (DRG) neurons in vitro. May be a stop signal for the DRG neurons in their target areas, and possibly also for other neurons. May also be involved in the maintenance and remodeling of neuronal connections. The sequence is that of Semaphorin-6C (Sema6c) from Rattus norvegicus (Rat).